The chain runs to 509 residues: 2,3-bisphosphoglycerate-independent phosphoglycerate mutase (509 aa).

Mn(2+) contacts are provided by Asp12 and Ser62. Ser62 (phosphoserine intermediate) is an active-site residue. Substrate-binding positions include His123, 153 to 154 (RD), Arg185, Arg191, 260 to 263 (RPDR), and Lys333. Positions 400, 404, 441, 442, and 460 each coordinate Mn(2+).

The protein belongs to the BPG-independent phosphoglycerate mutase family. As to quaternary structure, monomer. Requires Mn(2+) as cofactor.

It carries out the reaction (2R)-2-phosphoglycerate = (2R)-3-phosphoglycerate. It participates in carbohydrate degradation; glycolysis; pyruvate from D-glyceraldehyde 3-phosphate: step 3/5. In terms of biological role, catalyzes the interconversion of 2-phosphoglycerate and 3-phosphoglycerate. The protein is 2,3-bisphosphoglycerate-independent phosphoglycerate mutase of Clostridium botulinum (strain Langeland / NCTC 10281 / Type F).